The primary structure comprises 600 residues: Elongation factor 4 (600 aa).

The tr-type G domain occupies 5 to 187 (KYIRNFSIIA…AIVNKLPPPK (183 aa)). Residues 17 to 22 (DHGKST) and 134 to 137 (NKID) contribute to the GTP site.

This sequence belongs to the TRAFAC class translation factor GTPase superfamily. Classic translation factor GTPase family. LepA subfamily.

The protein localises to the cell inner membrane. The catalysed reaction is GTP + H2O = GDP + phosphate + H(+). Its function is as follows. Required for accurate and efficient protein synthesis under certain stress conditions. May act as a fidelity factor of the translation reaction, by catalyzing a one-codon backward translocation of tRNAs on improperly translocated ribosomes. Back-translocation proceeds from a post-translocation (POST) complex to a pre-translocation (PRE) complex, thus giving elongation factor G a second chance to translocate the tRNAs correctly. Binds to ribosomes in a GTP-dependent manner. The protein is Elongation factor 4 of Rickettsia bellii (strain OSU 85-389).